The primary structure comprises 155 residues: Troponin C, body wall muscle (155 aa).

V1 is subject to N-acetylvaline. 4 consecutive EF-hand domains span residues 7–43 (DEKSQFRAAFDIFVADAKDGTISSKELGKVMKMLGQN), 44–79 (PTEKDLQEMIEEVDIDGSGTIDFEEFCLMMYRQMQA), 88–121 (REEKELSEAFRLFDLDGDGIGDELKAALDGTGEN), and 122–155 (VETWEVDEMMADGDKNHDSQIDYEEWVTMMKFVQ). Positions 57, 59, 61, 63, and 68 each coordinate Ca(2+). The Ca(2+) site is built by D135, N137, D139, Q141, and E146.

The protein belongs to the troponin C family.

In terms of biological role, troponin is the central regulatory protein of muscle contraction. Tn consists of three components: Tn-I which is the inhibitor of actomyosin ATPase, Tn-T which contains the binding site for tropomyosin and Tn-C. The binding of calcium to Tn-C abolishes the inhibitory action of Tn on actin filaments. The sequence is that of Troponin C, body wall muscle from Halocynthia roretzi (Sea squirt).